We begin with the raw amino-acid sequence, 187 residues long: Elongation factor P (187 aa).

The protein belongs to the elongation factor P family.

The protein localises to the cytoplasm. The protein operates within protein biosynthesis; polypeptide chain elongation. Its function is as follows. Involved in peptide bond synthesis. Stimulates efficient translation and peptide-bond synthesis on native or reconstituted 70S ribosomes in vitro. Probably functions indirectly by altering the affinity of the ribosome for aminoacyl-tRNA, thus increasing their reactivity as acceptors for peptidyl transferase. The polypeptide is Elongation factor P (Roseiflexus castenholzii (strain DSM 13941 / HLO8)).